A 240-amino-acid chain; its full sequence is Putative peptidoglycan hydrolase Rv2525c (240 aa).

The tat-type signal signal peptide spans 1–33; that stretch reads MSVSRRDVLKFAAATPGVLGLGVVASSLRAAPA.

In terms of processing, predicted to be exported by the Tat system. The position of the signal peptide cleavage has not been experimentally proven.

The protein resides in the secreted. It carries out the reaction Hydrolysis of (1-&gt;4)-beta-linkages between N-acetylmuramic acid and N-acetyl-D-glucosamine residues in a peptidoglycan and between N-acetyl-D-glucosamine residues in chitodextrins.. It functions in the pathway cell wall degradation; peptidoglycan degradation. In terms of biological role, may function as a peptidoglycan hydrolase with glycosidase activity. In vitro, displays esterase activity toward p-nitrophenyl esters of various acyl chain length (C4 to C16), with a preference for p-nitrophenyl butyrate (C4). The protein is Putative peptidoglycan hydrolase Rv2525c of Mycobacterium tuberculosis (strain ATCC 25618 / H37Rv).